The sequence spans 517 residues: ADP-ribosylation factor GTPase-activating protein 3 (517 aa).

The 117-residue stretch at 10 to 126 (LTIFKRLRSV…IKALASQATR (117 aa)) folds into the Arf-GAP domain. The segment at 25-48 (CFDCGAKNPSWASITYGVFLCIDC) adopts a C4-type zinc-finger fold. The tract at residues 139-200 (VPPSSPPPKE…EQGPSVEGLN (62 aa)) is disordered. The span at 159 to 176 (EVSSTGWASAQPEPSLTP) shows a compositional bias: polar residues. S231 carries the phosphoserine modification. A coiled-coil region spans residues 243 to 263 (NEIEKQAQAVDKMNAQEDLLS). Residues S271 and S275 each carry the phosphoserine modification. Over residues 291–305 (EKMNMSGKKKAESER) the composition is skewed to basic and acidic residues. Disordered stretches follow at residues 291–349 (EKMN…SDDS) and 362–422 (MELR…QKKF). Residues 312–333 (NSRSGISHSVTSDMQTIEQETP) are compositionally biased toward polar residues. Phosphoserine is present on S371. Over residues 379–390 (YWKKETIKDTDP) the composition is skewed to basic and acidic residues. Residues S429, S452, S454, S456, S458, and S459 each carry the phosphoserine modification.

The protein localises to the cytoplasm. It is found in the golgi apparatus membrane. Its activity is regulated as follows. GAP activity stimulated by phosphatidylinositol 4,5-bisphosphate (PIP2). GTPase-activating protein (GAP) for ADP ribosylation factor 1 (ARF1). Hydrolysis of ARF1-bound GTP may lead to dissociation of coatomer from Golgi-derived membranes to allow fusion with target membranes. This chain is ADP-ribosylation factor GTPase-activating protein 3, found in Bos taurus (Bovine).